Reading from the N-terminus, the 301-residue chain is tRNA dimethylallyltransferase 1 (301 aa).

10-17 (GPTASGKT) contacts ATP. Residue 12 to 17 (TASGKT) participates in substrate binding. The segment at 35-38 (DSRQ) is interaction with substrate tRNA.

Belongs to the IPP transferase family. As to quaternary structure, monomer. Requires Mg(2+) as cofactor.

It carries out the reaction adenosine(37) in tRNA + dimethylallyl diphosphate = N(6)-dimethylallyladenosine(37) in tRNA + diphosphate. Catalyzes the transfer of a dimethylallyl group onto the adenine at position 37 in tRNAs that read codons beginning with uridine, leading to the formation of N6-(dimethylallyl)adenosine (i(6)A). This chain is tRNA dimethylallyltransferase 1, found in Geotalea uraniireducens (strain Rf4) (Geobacter uraniireducens).